The sequence spans 232 residues: Ribonuclease HII (232 aa).

An RNase H type-2 domain is found at 26–218 (RILCGVDEAG…VRRALEGMSA (193 aa)). A divalent metal cation contacts are provided by Asp-32, Glu-33, and Asp-127.

Belongs to the RNase HII family. Mn(2+) is required as a cofactor. It depends on Mg(2+) as a cofactor.

The protein localises to the cytoplasm. The enzyme catalyses Endonucleolytic cleavage to 5'-phosphomonoester.. Its function is as follows. Endonuclease that specifically degrades the RNA of RNA-DNA hybrids. This Ralstonia pickettii (strain 12J) protein is Ribonuclease HII.